We begin with the raw amino-acid sequence, 103 residues long: Small ribosomal subunit protein uS10 (103 aa).

This sequence belongs to the universal ribosomal protein uS10 family. Part of the 30S ribosomal subunit.

In terms of biological role, involved in the binding of tRNA to the ribosomes. This Shewanella frigidimarina (strain NCIMB 400) protein is Small ribosomal subunit protein uS10.